Here is a 159-residue protein sequence, read N- to C-terminus: 6,7-dimethyl-8-ribityllumazine synthase (159 aa).

5-amino-6-(D-ribitylamino)uracil contacts are provided by residues Y23, 58–60 (AYE), and 82–84 (TII). H90 functions as the Proton donor in the catalytic mechanism. I115 provides a ligand contact to 5-amino-6-(D-ribitylamino)uracil. R129 contacts (2S)-2-hydroxy-3-oxobutyl phosphate.

The protein belongs to the DMRL synthase family. In terms of assembly, forms an icosahedral capsid composed of 60 subunits, arranged as a dodecamer of pentamers.

The enzyme catalyses (2S)-2-hydroxy-3-oxobutyl phosphate + 5-amino-6-(D-ribitylamino)uracil = 6,7-dimethyl-8-(1-D-ribityl)lumazine + phosphate + 2 H2O + H(+). It participates in cofactor biosynthesis; riboflavin biosynthesis; riboflavin from 2-hydroxy-3-oxobutyl phosphate and 5-amino-6-(D-ribitylamino)uracil: step 1/2. In terms of biological role, catalyzes the formation of 6,7-dimethyl-8-ribityllumazine by condensation of 5-amino-6-(D-ribitylamino)uracil with 3,4-dihydroxy-2-butanone 4-phosphate. This is the penultimate step in the biosynthesis of riboflavin. In Buchnera aphidicola subsp. Baizongia pistaciae (strain Bp), this protein is 6,7-dimethyl-8-ribityllumazine synthase.